Here is a 65-residue protein sequence, read N- to C-terminus: MHCLPVLVILLLLIASTPSVDARPNPKDDVPLASFHGAVNAKRYLRTLWNSRDCCDPKEPCCFIG.

Positions 1-22 (MHCLPVLVILLLLIASTPSVDA) are cleaved as a signal peptide. Positions 23 to 52 (RPNPKDDVPLASFHGAVNAKRYLRTLWNSR) are excised as a propeptide. Ile-64 is modified (isoleucine amide).

The protein belongs to the conotoxin T superfamily. Post-translationally, contains 2 disulfide bonds that can be either 'C1-C3, C2-C4' or 'C1-C4, C2-C3', since these disulfide connectivities have been observed for conotoxins with cysteine framework V (for examples, see AC P0DQQ7 and AC P81755). Expressed by the venom duct.

Its subcellular location is the secreted. In Conus tessulatus (Tessellate cone), this protein is Conotoxin TsMRCL-05.